Here is a 343-residue protein sequence, read N- to C-terminus: Adenine deaminase (343 aa).

The Zn(2+) site is built by histidine 17, histidine 19, and histidine 197. Glutamate 200 functions as the Proton donor in the catalytic mechanism. Aspartate 278 provides a ligand contact to Zn(2+). Aspartate 279 lines the substrate pocket.

This sequence belongs to the metallo-dependent hydrolases superfamily. Adenosine and AMP deaminases family. Adenine deaminase type 2 subfamily. Requires Zn(2+) as cofactor.

It catalyses the reaction adenine + H2O + H(+) = hypoxanthine + NH4(+). In terms of biological role, catalyzes the hydrolytic deamination of adenine to hypoxanthine. Plays an important role in the purine salvage pathway and in nitrogen catabolism. This is Adenine deaminase from Rhodopseudomonas palustris (strain BisB18).